The following is a 565-amino-acid chain: MGDKARRKWLVLAAWPYAYGVPHLGNLIGSVLSADVAARFLRLAGDEVVFVSGSDMHGTPIEVEALKRGESPKDLAERNHEKIKELFERWEISFDNYSKTESPTHIKFVQDFYRRVYENGYVFSDTVQLYYCPKDKIFLPDRYIVGTCPYCGYDRAYGDQCENCGRLLEPTLLLNPRCAICGSTPELRTTTHWFFDLPKLTDALKRYIEENENLPPNARNMSLQILRDGLKPRALTRDNKWGIPAPFPGAEDKTIYVWMEAVLGYISATIEYFASKGEPEKWKEFWLDPETRSVYFIGKDNIPFHTLILPALLIASGEKYVLPWTVASTEYLLFRGLKFSKSRRIGVWIDEALEVFPADYWRFVLVSLRPEQKDMSFTWEEFLRIVNNDLNDNIGNFVHRVLVLVQRKFGGIAPAPLDFADEDLKFREEILARSREVAEFMYAFRFKEALTHILWLSSSGNSYLNFRKPWELDSESARTPAFLALHAVKALAIMLYPIIPRSSQEMWKLLGYKDDIANHRWHEINEAVPPGQELPSPRPLFRKISEEELKAAVEKIEELRASRSS.

Positions 16-26 match the 'HIGH' region motif; it reads PYAYGVPHLGN. Cys-148, Cys-151, Cys-161, and Cys-164 together coordinate Zn(2+). The short motif at 338-342 is the 'KMSKS' region element; the sequence is KFSKS. Residue Lys-341 coordinates ATP.

This sequence belongs to the class-I aminoacyl-tRNA synthetase family. MetG type 1 subfamily. Requires Zn(2+) as cofactor.

The protein resides in the cytoplasm. The enzyme catalyses tRNA(Met) + L-methionine + ATP = L-methionyl-tRNA(Met) + AMP + diphosphate. Functionally, is required not only for elongation of protein synthesis but also for the initiation of all mRNA translation through initiator tRNA(fMet) aminoacylation. The protein is Methionine--tRNA ligase of Thermofilum pendens (strain DSM 2475 / Hrk 5).